The sequence spans 491 residues: Probable CtpA-like serine protease (491 aa).

Residues 1–22 are disordered; sequence MNDHQKNHATSQDDNTKSTPSK. Residues 8 to 22 are compositionally biased toward polar residues; that stretch reads HATSQDDNTKSTPSK. The chain crosses the membrane as a helical span at residues 31-51; it reads LWHFILVILGIILLTSIITVV. The PDZ domain maps to 119–201; that stretch reads TKQFNEGVSG…TYVTLTIKRG (83 aa). Residues Ser-324, Asp-335, and Lys-349 each act as charge relay system in the active site.

The protein belongs to the peptidase S41A family.

Its subcellular location is the cell membrane. This Staphylococcus epidermidis (strain ATCC 12228 / FDA PCI 1200) protein is Probable CtpA-like serine protease.